The chain runs to 186 residues: Ribosome-recycling factor (186 aa).

It belongs to the RRF family.

Its subcellular location is the cytoplasm. Responsible for the release of ribosomes from messenger RNA at the termination of protein biosynthesis. May increase the efficiency of translation by recycling ribosomes from one round of translation to another. The chain is Ribosome-recycling factor from Polynucleobacter asymbioticus (strain DSM 18221 / CIP 109841 / QLW-P1DMWA-1) (Polynucleobacter necessarius subsp. asymbioticus).